The chain runs to 546 residues: Chaperonin GroEL (546 aa).

ATP is bound by residues Thr-30–Pro-33, Lys-51, Asp-87–Thr-91, Gly-415, Asn-479–Ala-481, and Asp-495.

This sequence belongs to the chaperonin (HSP60) family. In terms of assembly, forms a cylinder of 14 subunits composed of two heptameric rings stacked back-to-back. Interacts with the co-chaperonin GroES.

The protein resides in the cytoplasm. The enzyme catalyses ATP + H2O + a folded polypeptide = ADP + phosphate + an unfolded polypeptide.. Together with its co-chaperonin GroES, plays an essential role in assisting protein folding. The GroEL-GroES system forms a nano-cage that allows encapsulation of the non-native substrate proteins and provides a physical environment optimized to promote and accelerate protein folding. In Xanthomonas axonopodis pv. citri (strain 306), this protein is Chaperonin GroEL.